A 400-amino-acid chain; its full sequence is Exodeoxyribonuclease 7 large subunit (400 aa).

Belongs to the XseA family. In terms of assembly, heterooligomer composed of large and small subunits.

It localises to the cytoplasm. It carries out the reaction Exonucleolytic cleavage in either 5'- to 3'- or 3'- to 5'-direction to yield nucleoside 5'-phosphates.. Functionally, bidirectionally degrades single-stranded DNA into large acid-insoluble oligonucleotides, which are then degraded further into small acid-soluble oligonucleotides. In Clostridium perfringens (strain ATCC 13124 / DSM 756 / JCM 1290 / NCIMB 6125 / NCTC 8237 / Type A), this protein is Exodeoxyribonuclease 7 large subunit.